Here is a 347-residue protein sequence, read N- to C-terminus: uncharacterized protein (347 aa).

The RING-type zinc-finger motif lies at 5–44 (CTICHNTPNRPVRLDCNHEFCYICIKGSIQNDMLNCAVCR). In terms of domain architecture, WWE spans 244–321 (NVQANFNVAR…NLDAWRQIKR (78 aa)).

This is an uncharacterized protein from Caenorhabditis elegans.